Reading from the N-terminus, the 128-residue chain is Large ribosomal subunit protein bL12 (128 aa).

As to quaternary structure, homodimer. Part of the 50S ribosomal subunit; present in 6 copies per ribosome. Forms part of the ribosomal stalk which helps the ribosome interact with GTP-bound translation factors. Forms a heptameric L10(L12)2(L12)2(L12)2 complex, where L10 forms an elongated spine to which 3 L12 dimers bind in a sequential fashion.

Forms part of the ribosomal stalk which helps the ribosome interact with GTP-bound translation factors. Is thus essential for accurate translation. This chain is Large ribosomal subunit protein bL12, found in Thermotoga maritima (strain ATCC 43589 / DSM 3109 / JCM 10099 / NBRC 100826 / MSB8).